Here is a 185-residue protein sequence, read N- to C-terminus: Ribosome-recycling factor (185 aa).

Residues 138-157 are disordered; it reads ELKKLEKDHTASEDEVKRAQ.

The protein belongs to the RRF family.

The protein resides in the cytoplasm. Functionally, responsible for the release of ribosomes from messenger RNA at the termination of protein biosynthesis. May increase the efficiency of translation by recycling ribosomes from one round of translation to another. This Desulfitobacterium hafniense (strain DSM 10664 / DCB-2) protein is Ribosome-recycling factor.